The chain runs to 636 residues: Dehydrogenase ARMGADRAFT_1018426 (636 aa).

The N-terminal stretch at 1–19 (MPALTYLLLAAIGASTVHS) is a signal peptide. Residues 49–50 (TA) and 70–71 (EG) contribute to the FAD site. Residue Asn99 is glycosylated (N-linked (GlcNAc...) asparagine). FAD contacts are provided by residues Trp104 and 134-137 (NGLT). Asn253 carries N-linked (GlcNAc...) asparagine glycosylation. An FAD-binding site is contributed by Val280. Asn333, Asn380, Asn394, and Asn498 each carry an N-linked (GlcNAc...) asparagine glycan. The Proton acceptor role is filled by His570. Residues Ala603 and 614–615 (PS) contribute to the FAD site.

Belongs to the GMC oxidoreductase family. Requires FAD as cofactor.

It participates in secondary metabolite biosynthesis. Its function is as follows. Dehydrogenase, part of the gene cluster that mediates the biosynthesis of melleolides, a range of antifungal and phytotoxic polyketide derivatives composed of an orsellinic acid (OA) moiety esterified to various sesquiterpene alcohols. The first step in melleolides biosynthesis is performed by the delta(6)-protoilludene synthase PRO1 which catalyzes the cyclization of farnesyl diphosphate to protoilludene. The orsellinic acid synthase armB produces OA by condensing acetyl-CoA with 3 malonyl-CoA units in a three-round chain elongation reaction folowed by a C2-C7 ring closure. ArmB further catalyzes the trans-esterification of OA to the various sesquiterpene alcohols resulting from the hydroxylation of protoilludene. The melleolides cluster also includes 5 cytochrome P450 monooxygenases, 4 NAD(+)-dependent oxidoreductases, one flavin-dependent oxidoreductase, and one O-methyltransferase. The cytochrome P450 monooxygenases may be involved in protoilludene hydroxylation to elaborate melleolides with multiple alcohol groups, such as melleolide D, which carries alcohol functionalities at C-4, C-5, C-10, and C-13. The role of the NAD(+)-dependent enzymes remains unknown. Numerous melleolides, including arnamial, show 5'-O-methylation of the aromatic moiety which may be catalyzed by the methyltransferase encoded in the cluster. The flavin-dependent oxidoreductase might represent the dehydrogenase yielding the aldehyde in position 1 of arnamial and other melleolides. Finally, several halogenase localized outside of the cluster, are able to catalyze the transfer of a single chlorine atom to the melleolide backbone, resulting in a 6'-chloromelleolide product. This chain is Dehydrogenase ARMGADRAFT_1018426, found in Armillaria gallica (Bulbous honey fungus).